The primary structure comprises 860 residues: Semaphorin-3aa (860 aa).

Positions 1 to 17 (MDYLVGIFLLLCGVALP) are cleaved as a signal peptide. Residues 31–515 (RLKLSYNEML…SDLGISQMPL (485 aa)) form the Sema domain. N53 is a glycosylation site (N-linked (GlcNAc...) asparagine). A disulfide bridge connects residues C104 and C115. A glycan (N-linked (GlcNAc...) asparagine) is linked at N126. Cystine bridges form between C133–C142, C270–C382, C294–C342, and C518–C536. The Ig-like C2-type domain maps to 579 to 668 (GYSSVEERSV…FIQPLRRINL (90 aa)). N593 is a glycosylation site (N-linked (GlcNAc...) asparagine). Residues C652 and C717 are joined by a disulfide bond. The disordered stretch occupies residues 725–860 (KKPKGKKAPK…HEQQRPPRSV (136 aa)). Composition is skewed to polar residues over residues 748-764 (TPQTTAQSLQNPTQRAQ) and 782-818 (TGLQRSQSPGGTVSTESQSTKPDTQKASESQRAQPNQ). The segment covering 838–860 (QLQENKRGRNRRTHEQQRPPRSV) has biased composition (basic and acidic residues).

The protein belongs to the semaphorin family.

It is found in the secreted. Functionally, may influence outgrowth by a variety of growth cones including those of the posterior lateral line ganglion. The sequence is that of Semaphorin-3aa (sema3aa) from Danio rerio (Zebrafish).